A 348-amino-acid chain; its full sequence is Histidinol-phosphate aminotransferase (348 aa).

Lys210 is subject to N6-(pyridoxal phosphate)lysine.

This sequence belongs to the class-II pyridoxal-phosphate-dependent aminotransferase family. Histidinol-phosphate aminotransferase subfamily. Homodimer. Requires pyridoxal 5'-phosphate as cofactor.

The enzyme catalyses L-histidinol phosphate + 2-oxoglutarate = 3-(imidazol-4-yl)-2-oxopropyl phosphate + L-glutamate. It participates in amino-acid biosynthesis; L-histidine biosynthesis; L-histidine from 5-phospho-alpha-D-ribose 1-diphosphate: step 7/9. In Pseudomonas putida (strain ATCC 700007 / DSM 6899 / JCM 31910 / BCRC 17059 / LMG 24140 / F1), this protein is Histidinol-phosphate aminotransferase.